Here is a 703-residue protein sequence, read N- to C-terminus: Meiotic coiled-coil protein 2 (703 aa).

2 stretches are compositionally biased toward polar residues: residues 1 to 19 (MQSI…SISE) and 245 to 258 (TNVR…STPL). Disordered regions lie at residues 1 to 29 (MQSI…SELN), 245 to 265 (TNVR…DVDL), and 284 to 309 (ASTN…RSSS). One can recognise a PUM-HD domain in the interval 331-686 (NPSVIPESTS…KVAYLVEKWN (356 aa)). Pumilio repeat units lie at residues 361–396 (NVII…NIVD), 397–432 (SIIS…QMGS), 433–468 (AMLG…AMMD), 469–504 (ELFL…NVMN), 509–544 (ALRG…ECIE), 545–580 (EIIF…RVID), 581–616 (ALLN…LYLK), and 625–660 (RTRQ…LVIT).

This Schizosaccharomyces pombe (strain 972 / ATCC 24843) (Fission yeast) protein is Meiotic coiled-coil protein 2 (mcp2).